Reading from the N-terminus, the 338-residue chain is Solute carrier family 35 member G3 (338 aa).

Positions 1-24 (MAGSHPYFNQPDSTHPSPPSAPPS) are disordered. 9 helical membrane-spanning segments follow: residues 37–57 (TSGL…VGPL), 67–87 (LPSL…ALLL), 105–125 (FFCA…VQVV), 160–180 (CGLL…LWTL), 185–205 (TGVY…ALSL), 221–241 (TVAF…LFVL), 250–270 (LLSW…FTCV), 281–301 (LVCA…YYML), and 305–325 (VAPS…IITA). The EamA 1 domain maps to 49–174 (LPAGFVGPLS…CILGLIIIVG (126 aa)). Residues 272–325 (YAVTKAHPALVCAVLHSEVVVALILQYYMLHETVAPSDIVAAGVVLGSIAIITA) enclose the EamA 2 domain.

The protein belongs to the SLC35G solute transporter family. In terms of tissue distribution, expressed in testis.

It is found in the membrane. This Homo sapiens (Human) protein is Solute carrier family 35 member G3 (SLC35G3).